A 105-amino-acid polypeptide reads, in one-letter code: MKVAGVFLLLSLALLCFFSGAFSQGGQDKRGWITRSEGRFPGKGVLRHRLFQINCGEFRDPKVFCTRESDPLCGSDGQTYGNKCAFCKALEKSSGKINLKHRGKC.

The signal sequence occupies residues M1–S23. The residue at position 24 (Q24) is a Pyrrolidone carboxylic acid. The 57-residue stretch at R49–C105 folds into the Kazal-like domain. 3 disulfide bridges follow: C55–C87, C65–C84, and C73–C105.

In terms of tissue distribution, expressed in the upper epidermis and in skin appendages.

The protein localises to the secreted. Serine protease inhibitor selective for kallikreins. Efficiently inhibits KLK5 and human KLK2, KLK4, KLK5, KLK6, KLK7, KLK12, KLK13 and KLK14. Doesn't inhibit human KLK1 and KLK8. This Mus musculus (Mouse) protein is Serine protease inhibitor Kazal-type 6 (Spink6).